The sequence spans 339 residues: MPSPTNPAKVETPFTTAALGNGVDFWKAYVENRPHPSDSFFELISEYHHSHGDSAAQSAIAHDVGTGPGNIAEKLLRHFDHVVGSDVNEQALAAAPALLPADSIKRMTFVKSSAEDLASANIPESVGKGQTDLILVSECIPLLDISKAFAAFRALLRPGGTLAIYFYSRPIFTGDNEAELNQLYDRIATRVCQFLLPFKGTPGFPIHYRAAEAMSSGLDSIPFDPEAWQDVVRYKWNADVPLTFNSKEGYDFEVEPVDRRDHSTEITKEITDRDFWAEEWDIGRVASFLDSVFPNYRNKAGDKFEEVQSLFTELETALGGPKATRKVSFPVVLLLATRK.

This sequence belongs to the methyltransferase superfamily.

It functions in the pathway secondary metabolite biosynthesis. In terms of biological role, methyltransferase; part of the gene cluster that mediates the biosynthesis of pestheic acid, a diphenyl ether which is a biosynthetic precursor of the unique chloropupukeananes. The biosynthesis initiates from condensation of acetate and malonate units catalyzed by the non-reducing PKS ptaA. As the ptaA protein is TE/CLC domain-deficient, hydrolysis and Claisen cyclization of the polyketide could be catalyzed by ptaB containing a beta-lactamase domain. The ptaB protein might hydrolyze the thioester bond between the ACP of ptaA and the intermediate to release atrochrysone carboxylic acid, which is spontaneously dehydrated to form endocrocin anthrone. Endocrocin anthrone is then converted to endocrocin, catalyzed by the anthrone oxygenase ptaC. Spontaneous decarboxylation of endocrocin occurs to generate emodin. An O-methyltransferase (ptaH or ptaI) could methylate emodin to form physcion. PtaJ could then catalyze the oxidative cleavage of physcion, and rotation of the intermediate could then afford desmethylisosulochrin. PtaF, a putative NADH-dependent oxidoreductase, might also participate in the oxidative cleavage step. Desmethylisosulochrin is then transformed by another O-methyltransferase (ptaH or ptaI) to form isosulochrin. Chlorination of isosulochrin by ptaM in the cyclohexadienone B ring then produces chloroisosulochrin. PtaE is responsible for the oxidative coupling reactions of both benzophenones isosulouchrin and chloroisosulochrin to RES-1214-1 and pestheic acid respectively, regardless of chlorination. The chain is Methyltransferase ptaI from Pestalotiopsis fici (strain W106-1 / CGMCC3.15140).